The chain runs to 501 residues: Lysine--tRNA ligase (501 aa).

Glu402 and Glu409 together coordinate Mg(2+).

It belongs to the class-II aminoacyl-tRNA synthetase family. In terms of assembly, homodimer. The cofactor is Mg(2+).

The protein localises to the cytoplasm. The enzyme catalyses tRNA(Lys) + L-lysine + ATP = L-lysyl-tRNA(Lys) + AMP + diphosphate. The sequence is that of Lysine--tRNA ligase from Helicobacter pylori (strain P12).